Reading from the N-terminus, the 86-residue chain is Small ribosomal subunit protein bS20 (86 aa).

It belongs to the bacterial ribosomal protein bS20 family.

Its function is as follows. Binds directly to 16S ribosomal RNA. In Paenarthrobacter aurescens (strain TC1), this protein is Small ribosomal subunit protein bS20.